Reading from the N-terminus, the 731-residue chain is Nucleolar GTP-binding protein 2 (731 aa).

Methionine 1 carries the post-translational modification N-acetylmethionine. Residues 1–33 form a disordered region; sequence MVKPKYKGRSTINPSKASTNPDRVQGAGGQNMR. Polar residues predominate over residues 10 to 22; the sequence is STINPSKASTNPD. One can recognise a CP-type G domain in the interval 207–368; sequence WGELYKVIDS…LIDCPGVVYP (162 aa). Residues 317–324 and 361–365 contribute to the GTP site; these read GYPNVGKS and DCPGV. Positions 481–502 are disordered; the sequence is VVPEAAQNNPGEEVTETAGEGS. At serine 504 the chain carries Phosphoserine. Residues 555-589 show a composition bias toward acidic residues; the sequence is LEEELESFSDEEEEEQEQQRDDAEESSSEPEEENV. Disordered regions lie at residues 555–594 and 630–731; these read LEEE…NDTK and EKIF…RQKQ. 2 stretches are compositionally biased toward basic and acidic residues: residues 630 to 652 and 662 to 671; these read EKIF…DRAP and QREEEQEHSN. Basic residues-rich tracts occupy residues 681-695 and 721-731; these read ERRR…KKVG and KHKRKKFRQKQ.

The protein belongs to the TRAFAC class YlqF/YawG GTPase family. NOG2 subfamily. Interacts with LYAR and RPL23A. Interacts with the nuclear importin-beta receptor and, at a lower extent, with importin-alpha. In terms of tissue distribution, widely expressed, with the highest expression level in testis.

It is found in the nucleus. The protein localises to the nucleolus. In terms of biological role, GTPase that associates with pre-60S ribosomal subunits in the nucleolus and is required for their nuclear export and maturation. May promote cell proliferation possibly by increasing p53/TP53 protein levels, and consequently those of its downstream product CDKN1A/p21, and decreasing RPL23A protein levels. In Homo sapiens (Human), this protein is Nucleolar GTP-binding protein 2 (GNL2).